Consider the following 283-residue polypeptide: D-alanine aminotransferase (283 aa).

Position 32 (Y32) interacts with substrate. R51 lines the pyridoxal 5'-phosphate pocket. Substrate is bound by residues R99 and H101. K146 (proton acceptor) is an active-site residue. The residue at position 146 (K146) is an N6-(pyridoxal phosphate)lysine. Pyridoxal 5'-phosphate is bound at residue E178.

This sequence belongs to the class-IV pyridoxal-phosphate-dependent aminotransferase family. Homodimer. It depends on pyridoxal 5'-phosphate as a cofactor.

The catalysed reaction is D-alanine + 2-oxoglutarate = D-glutamate + pyruvate. Acts on the D-isomers of alanine, leucine, aspartate, glutamate, aminobutyrate, norvaline and asparagine. The enzyme transfers an amino group from a substrate D-amino acid to the pyridoxal phosphate cofactor to form pyridoxamine and an alpha-keto acid in the first half-reaction. The second half-reaction is the reverse of the first, transferring the amino group from the pyridoxamine to a second alpha-keto acid to form the product D-amino acid via a ping-pong mechanism. This is an important process in the formation of D-alanine and D-glutamate, which are essential bacterial cell wall components. The sequence is that of D-alanine aminotransferase (dat) from Lysinibacillus sphaericus (Bacillus sphaericus).